The following is a 121-amino-acid chain: SLIELTKMVFQETGKNPVTYYTLYGCNCGVGRRGKPKDATDRCCFVHRCCYKKLTGCDPKKDRYSYSWENKAIVCGEKNPCLKELCECDKAVAICLRKNLGTYDKNYRFTMKFLCDKPEKC.

Cystine bridges form between cysteine 26–cysteine 115, cysteine 28–cysteine 44, cysteine 43–cysteine 95, cysteine 49–cysteine 121, cysteine 50–cysteine 88, cysteine 57–cysteine 81, and cysteine 75–cysteine 86.

Belongs to the phospholipase A2 family. Group II subfamily. R49 sub-subfamily. As to quaternary structure, homodimer. As to expression, expressed by the venom gland.

The protein resides in the secreted. In terms of biological role, snake venom phospholipase A2 homolog that induces myonecrosis, and edema. Has low myotoxic activity. This is Basic phospholipase A2 homolog zhaoermiatoxin from Protobothrops mangshanensis (Mangshan pitviper).